The primary structure comprises 192 residues: Ion-translocating oxidoreductase complex subunit B (192 aa).

The interval M1–S26 is hydrophobic. Residues E32–V91 form the 4Fe-4S domain. Residues C49, C52, C57, C74, C117, C120, C123, C127, C147, C150, C153, and C157 each contribute to the [4Fe-4S] cluster site. 4Fe-4S ferredoxin-type domains lie at M108–R137 and A138–V167.

Belongs to the 4Fe4S bacterial-type ferredoxin family. RnfB subfamily. In terms of assembly, the complex is composed of six subunits: RsxA, RsxB, RsxC, RsxD, RsxE and RsxG. The cofactor is [4Fe-4S] cluster.

The protein localises to the cell inner membrane. Part of a membrane-bound complex that couples electron transfer with translocation of ions across the membrane. Required to maintain the reduced state of SoxR. This Escherichia coli O8 (strain IAI1) protein is Ion-translocating oxidoreductase complex subunit B.